Here is a 482-residue protein sequence, read N- to C-terminus: ATP synthase subunit beta (482 aa).

Residue 162 to 169 (GGAGVGKT) coordinates ATP.

The protein belongs to the ATPase alpha/beta chains family. In terms of assembly, F-type ATPases have 2 components, CF(1) - the catalytic core - and CF(0) - the membrane proton channel. CF(1) has five subunits: alpha(3), beta(3), gamma(1), delta(1), epsilon(1). CF(0) has four main subunits: a(1), b(1), b'(1) and c(9-12).

It localises to the cellular thylakoid membrane. The enzyme catalyses ATP + H2O + 4 H(+)(in) = ADP + phosphate + 5 H(+)(out). In terms of biological role, produces ATP from ADP in the presence of a proton gradient across the membrane. The catalytic sites are hosted primarily by the beta subunits. This is ATP synthase subunit beta from Nostoc punctiforme (strain ATCC 29133 / PCC 73102).